A 77-amino-acid polypeptide reads, in one-letter code: Integrin beta-2 (77 aa).

A disulfide bond links C36 and C43. N54 is a glycosylation site (N-linked (GlcNAc...) asparagine).

Belongs to the integrin beta chain family. As to quaternary structure, dimer of an alpha and beta subunit.

It is found in the membrane. Functionally, integrins are a large family of cell surface glycoproteins that mediate cell to cell and cell to matrix adhesion. The polypeptide is Integrin beta-2 (itgb2) (Xenopus laevis (African clawed frog)).